A 245-amino-acid chain; its full sequence is RNA polymerase sigma factor SigI5 (245 aa).

The Polymerase core binding motif lies at 60–73; it reads DEYSIGLMAFNEAI. The segment at residues 202–221 is a DNA-binding region (H-T-H motif); the sequence is MKELSKIIDVHPKTVERNRA.

This sequence belongs to the sigma-70 factor family. SigI subfamily. As to quaternary structure, interacts with RsgI5.

The protein localises to the cytoplasm. With respect to regulation, negatively regulated by the anti-sigma-I factor RsgI5. Binding of the polysaccharide substrate to RsgI5 may lead to the release and activation of SigI5. Functionally, sigma factors are initiation factors that promote the attachment of RNA polymerase to specific initiation sites and are then released. This sigma factor is involved in regulation of cellulosomal genes via an external polysaccharide-sensing mechanism. The polypeptide is RNA polymerase sigma factor SigI5 (Acetivibrio thermocellus (strain ATCC 27405 / DSM 1237 / JCM 9322 / NBRC 103400 / NCIMB 10682 / NRRL B-4536 / VPI 7372) (Clostridium thermocellum)).